The following is a 358-amino-acid chain: Very long chain fatty acid elongase AAEL008004 (358 aa).

7 consecutive transmembrane segments (helical) span residues 26-46 (WPLMSSPFPTLALCLGYVYLV), 66-86 (LILYNFVQVVFSAWLFYEIGI), 115-135 (ACWWYYFSKFTEFFDTFFFVM), 147-167 (VIHHGCMPMSVWFGVKFTPGG), 171-191 (FFGLLNTFVHIVMYTYYLFTA), 207-227 (TSLQMVQFVAIMVHAFQLLFI), and 234-254 (AFVWWIGMHAVMFLFLFNEFY). Positions 285-295 (SAVSSNGSAIT) are enriched in polar residues. Residues 285 to 322 (SAVSSNGSAITANGHHGKNGSVHHHSNGSATSNGTSLL) form a disordered region. Over residues 299–310 (HHGKNGSVHHHS) the composition is skewed to basic residues. The span at 311-322 (NGSATSNGTSLL) shows a compositional bias: polar residues.

Belongs to the ELO family.

The protein localises to the membrane. It carries out the reaction a very-long-chain acyl-CoA + malonyl-CoA + H(+) = a very-long-chain 3-oxoacyl-CoA + CO2 + CoA. In terms of biological role, could be implicated in synthesis of very long chain fatty acids. This is Very long chain fatty acid elongase AAEL008004 from Aedes aegypti (Yellowfever mosquito).